The primary structure comprises 1144 residues: Probable translation initiation factor IF-2 (1144 aa).

Residues 232–362 (FAGVMFGDGS…LSLLLLRFGI (131 aa)) enclose the DOD-type homing endonuclease domain. The tr-type G domain maps to 551–768 (TTETHNFVAN…LIAGLSQKYL (218 aa)). GTP is bound by residues 624–628 (DTPGH) and 678–681 (NKID).

It belongs to the TRAFAC class translation factor GTPase superfamily. Classic translation factor GTPase family. IF-2 subfamily. Post-translationally, this protein undergoes a protein self splicing that involves a post-translational excision of the intervening region (intein) followed by peptide ligation.

Its function is as follows. Function in general translation initiation by promoting the binding of the formylmethionine-tRNA to ribosomes. Seems to function along with eIF-2. This is Probable translation initiation factor IF-2 (infB) from Thermococcus kodakarensis (strain ATCC BAA-918 / JCM 12380 / KOD1) (Pyrococcus kodakaraensis (strain KOD1)).